The sequence spans 607 residues: Guanine nucleotide-binding protein-like 1 (607 aa).

The segment covering 1-14 (MPRKKPFSVKQKKK) has biased composition (basic residues). The disordered stretch occupies residues 1–81 (MPRKKPFSVK…GPRGYDPNRY (81 aa)). Over residues 15-26 (QLQDKRERKRGL) the composition is skewed to basic and acidic residues. Phosphoserine occurs at positions 32, 33, and 34. Phosphothreonine occurs at positions 48 and 50. Residues Ser-51 and Ser-68 each carry the phosphoserine modification. The CP-type G domain occupies 178–418 (WRQLWRVLEM…LCDCPGLIFP (241 aa)). Residue 225 to 228 (NKVD) participates in GTP binding. Phosphoserine is present on Ser-324. GTP is bound by residues 367–374 (GFPNVGKS) and 411–415 (DCPGL). The disordered stretch occupies residues 547 to 607 (GPAGDEEEEE…PYALLGEDEC (61 aa)). Over residues 550–584 (GDEEEEEEEELSSSCEEEGEEDRDADEEGEGDEDT) the composition is skewed to acidic residues. A phosphoserine mark is found at Ser-561, Ser-562, and Ser-563.

This sequence belongs to the TRAFAC class YlqF/YawG GTPase family.

Functionally, possible regulatory or functional link with the histocompatibility cluster. This Pongo abelii (Sumatran orangutan) protein is Guanine nucleotide-binding protein-like 1 (GNL1).